The primary structure comprises 156 residues: Ribosomal RNA large subunit methyltransferase H (156 aa).

S-adenosyl-L-methionine is bound by residues Leu-73, Gly-104, and 123-128 (VSSLTL).

This sequence belongs to the RNA methyltransferase RlmH family. As to quaternary structure, homodimer.

The protein localises to the cytoplasm. The enzyme catalyses pseudouridine(1915) in 23S rRNA + S-adenosyl-L-methionine = N(3)-methylpseudouridine(1915) in 23S rRNA + S-adenosyl-L-homocysteine + H(+). Its function is as follows. Specifically methylates the pseudouridine at position 1915 (m3Psi1915) in 23S rRNA. This is Ribosomal RNA large subunit methyltransferase H from Paraburkholderia phytofirmans (strain DSM 17436 / LMG 22146 / PsJN) (Burkholderia phytofirmans).